A 365-amino-acid chain; its full sequence is Putative glutamate--cysteine ligase 2-3 (365 aa).

This sequence belongs to the glutamate--cysteine ligase type 2 family. YbdK subfamily.

The enzyme catalyses L-cysteine + L-glutamate + ATP = gamma-L-glutamyl-L-cysteine + ADP + phosphate + H(+). Its function is as follows. ATP-dependent carboxylate-amine ligase which exhibits weak glutamate--cysteine ligase activity. This Mycolicibacterium smegmatis (strain ATCC 700084 / mc(2)155) (Mycobacterium smegmatis) protein is Putative glutamate--cysteine ligase 2-3.